Here is a 475-residue protein sequence, read N- to C-terminus: UDP-N-acetylmuramate--L-alanine ligase (475 aa).

Position 125-131 (125-131 (GTHGKTT)) interacts with ATP.

The protein belongs to the MurCDEF family.

It localises to the cytoplasm. It catalyses the reaction UDP-N-acetyl-alpha-D-muramate + L-alanine + ATP = UDP-N-acetyl-alpha-D-muramoyl-L-alanine + ADP + phosphate + H(+). It functions in the pathway cell wall biogenesis; peptidoglycan biosynthesis. Its function is as follows. Cell wall formation. The sequence is that of UDP-N-acetylmuramate--L-alanine ligase from Glaesserella parasuis serovar 5 (strain SH0165) (Haemophilus parasuis).